Reading from the N-terminus, the 308-residue chain is Putative cathepsin L 3 (308 aa).

Positions 1 to 21 (MKQFLTAAIVTLLMTAGYYHL) are cleaved as a signal peptide. Positions 22–110 (QEDDTNDFER…GASLPEVQLE (89 aa)) are cleaved as a propeptide — activation peptide. Disulfide bonds link Cys-129/Cys-170 and Cys-254/Cys-298. Residues His-261 and Asn-278 contribute to the active site.

It belongs to the peptidase C1 family.

It localises to the secreted. It carries out the reaction Specificity close to that of papain. As compared to cathepsin B, cathepsin L exhibits higher activity toward protein substrates, but has little activity on Z-Arg-Arg-NHMec, and no peptidyl-dipeptidase activity.. In terms of biological role, may be involved in extracellular digestion. The sequence is that of Putative cathepsin L 3 from Paramecium tetraurelia.